Here is a 604-residue protein sequence, read N- to C-terminus: MSFDAKHFLKTVSESPGVYRMLDAEGNVLYVGKAKRLKARLASYFRGALNAKTQALVSRIEDIQVTITRTETEALLLEQTLIKEQRPPYNILLRDDKSYPFIFVSDRHPYPALEFKRARQKRGDGRYLGPFPSTTAVRESLSLMQKIFRIRNCEDSVFAHRTRPCLQYQIQRCSAPCVDYIGREEYQRDIDHAIMCLEGRSEQVTAQLTRDMETASQALDFEEAARLRDQIQQLRRLQERQIVDTGDGDADIFALAERPGGLCISALAVRGGRMLGARHHMPQNGLDLTAEALLGEFISHYYLGHEREIPAEVITALPLADSDVIQAALSERAGKRIRLAHQVRGHRAQWLRLAETNAEQHLTTQLANRSQLAKRFASLRDAMQLQETPTRLECFDISHSHGEATVASCVVFDQDGPVKSDYRRFNIEGVAAGDDYAAMRQALTRRYKRLTQDDSKLPGILIVDGGKGQLNMAREVLEDVGITGTHLLGVAKGTTRKPGLETLFLETVDNSLALDSASPGLHLIQHIRDEAHRFAITGHRQQRDKQRRTSTLQDIPGIGPKRRRELLRFFGGLQGVRQASRDELARVPGISAQMATTIHQALHG.

Residues 14–91 (ESPGVYRMLD…IKEQRPPYNI (78 aa)) form the GIY-YIG domain. Residues 202-237 (EQVTAQLTRDMETASQALDFEEAARLRDQIQQLRRL) enclose the UVR domain. Positions 538–557 (GHRQQRDKQRRTSTLQDIPG) are disordered.

The protein belongs to the UvrC family. As to quaternary structure, interacts with UvrB in an incision complex.

It is found in the cytoplasm. The UvrABC repair system catalyzes the recognition and processing of DNA lesions. UvrC both incises the 5' and 3' sides of the lesion. The N-terminal half is responsible for the 3' incision and the C-terminal half is responsible for the 5' incision. The sequence is that of UvrABC system protein C from Chromohalobacter salexigens (strain ATCC BAA-138 / DSM 3043 / CIP 106854 / NCIMB 13768 / 1H11).